Here is a 151-residue protein sequence, read N- to C-terminus: MTKTYLPPQDALEREWYIVDATDQRLGRLASEIAMVLRGKKKAEYTPHLDTGDFVIVINAEKIAVTGKKRTQKLYRRHSGRPGGMKTETFAKLQQRIPERIVEHAVKGMLPKNSLGKQLFTKLKVYAGPTHPHAAQKPKELKVNTIPGAES.

The protein belongs to the universal ribosomal protein uL13 family. Part of the 50S ribosomal subunit.

Functionally, this protein is one of the early assembly proteins of the 50S ribosomal subunit, although it is not seen to bind rRNA by itself. It is important during the early stages of 50S assembly. This Microchaete diplosiphon (Fremyella diplosiphon) protein is Large ribosomal subunit protein uL13.